The following is a 244-amino-acid chain: MSRNIDFSAFQLKVIAIIAMSLDHSALLFLSDGSWRYECLRFVGRLTLPLMCFFLVEGFFHSRNHQKYLGRLLFFGVIAQPFYSWMIAFDQIDSADLRFFLQTGNVLFTLALALLALMIRASRLSVPLKITLIFALSFAALYCDWGIYPVIFTLVLAHYYPERKAQTIAYLLAAMGLLLLADRQIFAVMPSLVLHIMPAGILLPPLFWHFYHGKKGARFGGRYAFYLFYPVHIALLCSAKMFLQ.

This Dichelobacter nodosus (Bacteroides nodosus) protein is Probable fimbrial assembly protein FimC, serogroup H1 (fimC).